We begin with the raw amino-acid sequence, 436 residues long: Arginine biosynthesis bifunctional protein ArgJ, mitochondrial (436 aa).

Substrate-binding residues include Thr172, Lys198, Thr209, Glu298, Asn431, and Ser436. Thr209 acts as the Nucleophile in catalysis.

It belongs to the ArgJ family. As to quaternary structure, heterodimer of an alpha and a beta chain. In terms of processing, the alpha and beta chains are autoproteolytically processed from a single precursor protein within the mitochondrion.

The protein localises to the mitochondrion matrix. It catalyses the reaction N(2)-acetyl-L-ornithine + L-glutamate = N-acetyl-L-glutamate + L-ornithine. It carries out the reaction L-glutamate + acetyl-CoA = N-acetyl-L-glutamate + CoA + H(+). The protein operates within amino-acid biosynthesis; L-arginine biosynthesis; L-ornithine and N-acetyl-L-glutamate from L-glutamate and N(2)-acetyl-L-ornithine (cyclic): step 1/1. It functions in the pathway amino-acid biosynthesis; L-arginine biosynthesis; N(2)-acetyl-L-ornithine from L-glutamate: step 1/4. Catalyzes two activities which are involved in the cyclic version of arginine biosynthesis: the synthesis of acetylglutamate from glutamate and acetyl-CoA, and of ornithine by transacetylation between acetylornithine and glutamate. The sequence is that of Arginine biosynthesis bifunctional protein ArgJ, mitochondrial from Meyerozyma guilliermondii (strain ATCC 6260 / CBS 566 / DSM 6381 / JCM 1539 / NBRC 10279 / NRRL Y-324) (Yeast).